Here is a 356-residue protein sequence, read N- to C-terminus: Ubiquitin-conjugating enzyme E2 Z (356 aa).

The span at 1–16 shows a compositional bias: low complexity; that stretch reads MAESPTEEAATATAGA. Residues 1 to 22 are disordered; the sequence is MAESPTEEAATATAGAGAAGPG. In terms of domain architecture, UBC core spans 101-255; sequence QCLLRIKRDI…IRHETIRVAV (155 aa). The Glycyl thioester intermediate role is filled by Cys190. Residues 334-356 form a disordered region; sequence NAEMDSDSSSSGTETDLHGSLRV. Phosphoserine is present on Ser339.

This sequence belongs to the ubiquitin-conjugating enzyme family.

Its subcellular location is the cytoplasm. The protein localises to the nucleus. The enzyme catalyses S-ubiquitinyl-[E1 ubiquitin-activating enzyme]-L-cysteine + [E2 ubiquitin-conjugating enzyme]-L-cysteine = [E1 ubiquitin-activating enzyme]-L-cysteine + S-ubiquitinyl-[E2 ubiquitin-conjugating enzyme]-L-cysteine.. It functions in the pathway protein modification; protein ubiquitination. In terms of biological role, catalyzes the covalent attachment of ubiquitin to other proteins. Specific substrate for UBA6, not charged with ubiquitin by UBE1. May be involved in apoptosis regulation. The chain is Ubiquitin-conjugating enzyme E2 Z (Ube2z) from Rattus norvegicus (Rat).